Consider the following 146-residue polypeptide: UPF0756 membrane protein PTH_1817 (146 aa).

Helical transmembrane passes span 6 to 26 (LLIG…ILLI), 46 to 66 (MGLT…KASW), 69 to 89 (IISS…ALAT), and 105 to 125 (IVFG…GIPV).

This sequence belongs to the UPF0756 family.

It is found in the cell membrane. This Pelotomaculum thermopropionicum (strain DSM 13744 / JCM 10971 / SI) protein is UPF0756 membrane protein PTH_1817.